We begin with the raw amino-acid sequence, 233 residues long: NAD(P)H-hydrate epimerase (233 aa).

Residues 10–217 (AINVDLELFN…ALQRKYELNL (208 aa)) form the YjeF N-terminal domain. A (6S)-NADPHX-binding site is contributed by 60 to 64 (NNGGD). Positions 61 and 125 each coordinate K(+). (6S)-NADPHX-binding positions include 129-135 (GFSFKPP) and Asp158. Ser161 provides a ligand contact to K(+).

This sequence belongs to the NnrE/AIBP family. It depends on K(+) as a cofactor.

The catalysed reaction is (6R)-NADHX = (6S)-NADHX. It carries out the reaction (6R)-NADPHX = (6S)-NADPHX. Its function is as follows. Catalyzes the epimerization of the S- and R-forms of NAD(P)HX, a damaged form of NAD(P)H that is a result of enzymatic or heat-dependent hydration. This is a prerequisite for the S-specific NAD(P)H-hydrate dehydratase to allow the repair of both epimers of NAD(P)HX. This is NAD(P)H-hydrate epimerase from Drosophila grimshawi (Hawaiian fruit fly).